We begin with the raw amino-acid sequence, 671 residues long: MEREPENGEPAEIKIIKEAYEKAFMFVNKGLNTDELGQKEEAKNYYKQGIGHLLRGISIAAAEPGHTGPAWEAARQMQQKMKETLQNVRTRLEILEKGLATSLRNDLQDVPKLYPEFPPKDACKKSPEQESVSTAPQRAEVDGSASAACAGPSGAPSALPVPSPSCPAEAPPAYSPQAAEGHYTVSYGTDSGEFSSVGEDFYRNRSQPPPLETLGLDADELILIPNGVQIFFVNPAGEVSAPSYPGYLRIVRFLDNSLDTVLNRPPGFLQVCDWLYPLVPDRSPVLKCTVGAYMFPDTMLQAAGCFVGVVLSSELPEDDRELFEDLLRQMSDLRLQANWNREEDEFQIPGRSSHPSEPPKEASGTDVRQSSSSGSSIDQGSKDARHKGKRGKKTKDSSEEVNLSQIVPCEPSSEEKSKELPEWSEKVAHNILSGASWVSWGLVKGAEFTGKAIQKGASKLRERIQPEEKPVEVSPAVTRGLYIAKQATGGAAKVSQLLVDGVCTVANCVGKELAPHVKKHGSKLVPESLKRDKDGKSALDGAMVVAASSVQGFSTVWQGLECAAKCIVNNVSAETVQTVRYKYGHNAGEATHNAVDSAINVGLTAYNIDNIGIKAMVKKTAKQTGHTLLEDYQIVERPQRESQGGATSTEGRRDIGKQVEEEKPGAGKKDK.

N-acetylmethionine is present on M1. The MIT domain maps to 16-94 (IKEAYEKAFM…LQNVRTRLEI (79 aa)). The interval 110-175 (VPKLYPEFPP…CPAEAPPAYS (66 aa)) is disordered. A compositionally biased stretch (basic and acidic residues) spans 118–128 (PPKDACKKSPE). Phosphoserine is present on S126. The span at 143–158 (GSASAACAGPSGAPSA) shows a compositional bias: low complexity. Over residues 159-174 (LPVPSPSCPAEAPPAY) the composition is skewed to pro residues. Residues 190–385 (DSGEFSSVGE…SIDQGSKDAR (196 aa)) are ubiquitin-binding region (UBR) domain. The short motif at 193 to 200 (EFSSVGED) is the LC3-interacting region (LIR); mediates interaction with MAP1LC3A AND MAP1LC3C element. The disordered stretch occupies residues 346–421 (FQIPGRSSHP…SSEEKSKELP (76 aa)). A Glycyl lysine isopeptide (Lys-Gly) (interchain with G-Cter in ubiquitin) cross-link involves residue K360. Over residues 369–379 (QSSSSGSSIDQ) the composition is skewed to low complexity. Residues 384–393 (ARHKGKRGKK) are compositionally biased toward basic residues. Residues 431–615 (ILSGASWVSW…YNIDNIGIKA (185 aa)) form the Senescence domain. The tract at residues 435–507 (ASWVSWGLVK…LVDGVCTVAN (73 aa)) is required for localization to lipid droplets. Phosphoserine is present on S474. The tract at residues 635–671 (VERPQRESQGGATSTEGRRDIGKQVEEEKPGAGKKDK) is disordered. Over residues 650-671 (EGRRDIGKQVEEEKPGAGKKDK) the composition is skewed to basic and acidic residues.

As to quaternary structure, interacts with ITCH and WWP1. Interacts (via MIT domain) with IST1; leading to the recruitment of SPART to midbodies. Interacts with MAP1LC3A and MAP1LC3C. Post-translationally, ubiquitinated; ubiquitination does not require ITCH and WWP1. As to expression, brain (at protein level).

It is found in the cytoplasm. It localises to the midbody. Its subcellular location is the lipid droplet. In terms of biological role, lipophagy receptor that plays an important role in lipid droplet (LD) turnover in motor neurons. Localizes to LDs and interacts with components of the autophagy machinery, such as MAP1LC3A/C proteins to deliver LDs to autophagosomes for degradation via lipophagy. Lipid transfer protein required for lipid droplet degradation, including by lipophagy. Can bind and transfer all lipid species found in lipid droplets, from phospholipids to triglycerides and sterol esters but the direction of lipid transfer by spartin and its cargos are unknown. May be implicated in endosomal trafficking, or microtubule dynamics, or both. Participates in cytokinesis. The sequence is that of Spartin from Mus musculus (Mouse).